The primary structure comprises 306 residues: Armadillo repeat-containing protein 10 (306 aa).

A helical membrane pass occupies residues 7–29 (VGWVAAGLVLGAGACYCIYRLTR). Ser-43 carries the phosphoserine modification. Thr-48 carries the phosphothreonine modification. The ARM repeat unit spans residues 101–143 (GGIPIVGSKINSLNQSIKEKALNALNNLSVNVENQTKIKIYVR).

Interacts with the DNA-binding domain of p53/TP53.

It localises to the endoplasmic reticulum membrane. The protein localises to the mitochondrion outer membrane. Its function is as follows. May play a role in cell survival and cell growth. May suppress the transcriptional activity of p53/TP53. The chain is Armadillo repeat-containing protein 10 (Armc10) from Rattus norvegicus (Rat).